The chain runs to 2185 residues: Genome polyprotein (2185 aa).

Gly-2 is lipidated: N-myristoyl glycine; by host. Over 2–1495 (GAQVSTQKTG…HVSRAFICLQ (1494 aa)) the chain is Cytoplasmic. Residues 568–584 (FFQGPVEDAITAAIGRV) are amphipathic alpha-helix. Residues His-872 and Asp-890 each act as for protease 2A activity in the active site. Cys-907 and Cys-909 together coordinate Zn(2+). The For protease 2A activity role is filled by Cys-961. The Zn(2+) site is built by Cys-967 and His-969. Positions 1101–1173 (NNSWLKKFTE…EQSAPSQSDQ (73 aa)) are membrane-binding. Positions 1101–1239 (NNSWLKKFTE…SPGAGKSVAT (139 aa)) are oligomerization. The segment at 1122-1126 (AVKIQ) is RNA-binding. The 157-residue stretch at 1205–1361 (EKKMSNYIQF…SMYSQNGKIN (157 aa)) folds into the SF3 helicase domain. Residues Cys-1369, Cys-1381, and Cys-1386 each coordinate Zn(2+). Residues 1369-1386 (CDDECCPVNFKKCCPLVC) form a C4-type; degenerate zinc finger. Residues 1413-1420 (EYNHRHSV) form an RNA-binding region. Positions 1424–1429 (LEALFQ) are oligomerization. The stretch at 1496-1511 (ALTTFVSVAGIIYIIY) is an intramembrane region. Residues 1512–2185 (KLFAGFQGAY…TLRRKWLDSF (674 aa)) are Cytoplasmic-facing. Position 1521 is an O-(5'-phospho-RNA)-tyrosine (Tyr-1521). The region spanning 1541–1719 (GPAFEFAVAM…FSAALLKHYF (179 aa)) is the Peptidase C3 domain. Residues His-1580, Glu-1611, and Cys-1687 each act as for protease 3C activity in the active site. The 117-residue stretch at 1950 to 2066 (GHLIAFDYSG…SYPWPIDASL (117 aa)) folds into the RdRp catalytic domain. 2 residues coordinate Mg(2+): Asp-1956 and Asp-2052.

Belongs to the picornaviruses polyprotein family. In terms of assembly, interacts with capsid protein VP1 and capsid protein VP3 to form heterotrimeric protomers. As to quaternary structure, interacts with capsid protein VP0, and capsid protein VP3 to form heterotrimeric protomers. Five protomers subsequently associate to form pentamers which serve as building blocks for the capsid. Interacts with capsid protein VP2, capsid protein VP3 and capsid protein VP4 following cleavage of capsid protein VP0. Interacts with host CD55. Interacts with host CXADR. Interacts with capsid protein VP1 and capsid protein VP3 in the mature capsid. In terms of assembly, interacts with capsid protein VP0 and capsid protein VP1 to form heterotrimeric protomers. Five protomers subsequently associate to form pentamers which serve as building blocks for the capsid. Interacts with capsid protein VP4 in the mature capsid. Interacts with protein 2C; this interaction may be important for virion morphogenesis. As to quaternary structure, interacts with capsid protein VP1 and capsid protein VP3. Homodimer. In terms of assembly, homohexamer; forms a hexameric ring structure with 6-fold symmetry characteristic of AAA+ ATPases. Interacts (via N-terminus) with host RTN3 (via reticulon domain); this interaction is important for viral replication. Interacts with capsid protein VP3; this interaction may be important for virion morphogenesis. As to quaternary structure, interacts with protein 3CD. Homodimer. Interacts with host GBF1. Interacts (via GOLD domain) with host ACBD3 (via GOLD domain); this interaction allows the formation of a viral protein 3A/ACBD3 heterotetramer with a 2:2 stoichiometry, which will stimulate the recruitment of host PI4KB in order to synthesize PI4P at the viral RNA replication sites. In terms of assembly, interacts with RNA-directed RNA polymerase. As to quaternary structure, interacts with host TICAM1 (via C-terminus). Interacts with protein 3AB and with RNA-directed RNA polymerase. In terms of assembly, interacts with Viral protein genome-linked and with protein 3CD. Mg(2+) serves as cofactor. Post-translationally, specific enzymatic cleavages in vivo by the viral proteases yield processing intermediates and the mature proteins. In terms of processing, myristoylation is required for the formation of pentamers during virus assembly. Further assembly of 12 pentamers and a molecule of genomic RNA generates the provirion. During virion maturation, immature virions are rendered infectious following cleavage of VP0 into VP4 and VP2. This maturation seems to be an autocatalytic event triggered by the presence of RNA in the capsid and it is followed by a conformational change infectious virion. Post-translationally, myristoylation is required during RNA encapsidation and formation of the mature virus particle. In terms of processing, VPg is uridylylated by the polymerase into VPg-pUpU. This acts as a nucleotide-peptide primer for the genomic RNA replication.

The protein resides in the virion. It is found in the host cytoplasm. The protein localises to the host cytoplasmic vesicle membrane. Its subcellular location is the host nucleus. It catalyses the reaction a ribonucleoside 5'-triphosphate + H2O = a ribonucleoside 5'-diphosphate + phosphate + H(+). The enzyme catalyses Selective cleavage of Tyr-|-Gly bond in the picornavirus polyprotein.. It carries out the reaction RNA(n) + a ribonucleoside 5'-triphosphate = RNA(n+1) + diphosphate. The catalysed reaction is Selective cleavage of Gln-|-Gly bond in the poliovirus polyprotein. In other picornavirus reactions Glu may be substituted for Gln, and Ser or Thr for Gly.. With respect to regulation, replication or transcription is subject to high level of random mutations by the nucleotide analog ribavirin. Its function is as follows. Forms an icosahedral capsid of pseudo T=3 symmetry with capsid proteins VP2 and VP3. The capsid is 300 Angstroms in diameter, composed of 60 copies of each capsid protein and enclosing the viral positive strand RNA genome. Capsid protein VP1 mainly forms the vertices of the capsid. Capsid protein VP1 interacts with host CD55 and CXADR to provide virion attachment to target host cells. This attachment induces virion internalization. Tyrosine kinases are probably involved in the entry process. After binding to its receptor, the capsid undergoes conformational changes. Capsid protein VP1 N-terminus (that contains an amphipathic alpha-helix) and capsid protein VP4 are externalized. Together, they shape a pore in the host membrane through which viral genome is translocated to host cell cytoplasm. In terms of biological role, forms an icosahedral capsid of pseudo T=3 symmetry with capsid proteins VP2 and VP3. The capsid is 300 Angstroms in diameter, composed of 60 copies of each capsid protein and enclosing the viral positive strand RNA genome. Lies on the inner surface of the capsid shell. After binding to the host receptor, the capsid undergoes conformational changes. Capsid protein VP4 is released, Capsid protein VP1 N-terminus is externalized, and together, they shape a pore in the host membrane through which the viral genome is translocated into the host cell cytoplasm. Functionally, component of immature procapsids, which is cleaved into capsid proteins VP4 and VP2 after maturation. Allows the capsid to remain inactive before the maturation step. Its function is as follows. Cysteine protease that cleaves viral polyprotein and specific host proteins. It is responsible for the autocatalytic cleavage between the P1 and P2 regions, which is the first cleavage occurring in the polyprotein. Also cleaves the host translation initiation factor EIF4G1, in order to shut down the capped cellular mRNA translation. Inhibits the host nucleus-cytoplasm protein and RNA trafficking by cleaving host members of the nuclear pores. Counteracts stress granule formation probably by antagonizing its assembly or promoting its dissassembly. Cleaves and inhibits host IFIH1/MDA5, thereby inhibiting the type-I IFN production and the establishment of the antiviral state. Cleaves and inhibits host MAVS, thereby inhibiting the type-I IFN production and the establishment of the antiviral state. In terms of biological role, plays an essential role in the virus replication cycle by acting as a viroporin. Creates a pore in the host endoplasmic reticulum and as a consequence releases Ca2+ in the cytoplasm of infected cell. In turn, high levels of cytoplasmic calcium may trigger membrane trafficking and transport of viral ER-associated proteins to viroplasms, sites of viral genome replication. Induces and associates with structural rearrangements of intracellular membranes. Displays RNA-binding, nucleotide binding and NTPase activities. May play a role in virion morphogenesis and viral RNA encapsidation by interacting with the capsid protein VP3. Functionally, localizes the viral replication complex to the surface of membranous vesicles. Together with protein 3CD binds the Cis-Active RNA Element (CRE) which is involved in RNA synthesis initiation. Acts as a cofactor to stimulate the activity of 3D polymerase, maybe through a nucleid acid chaperone activity. Its function is as follows. Localizes the viral replication complex to the surface of membranous vesicles. It inhibits host cell endoplasmic reticulum-to-Golgi apparatus transport and causes the disassembly of the Golgi complex, possibly through GBF1 interaction. This would result in depletion of MHC, trail receptors and IFN receptors at the host cell surface. Plays an essential role in viral RNA replication by recruiting ACBD3 and PI4KB at the viral replication sites, thereby allowing the formation of the rearranged membranous structures where viral replication takes place. In terms of biological role, acts as a primer for viral RNA replication and remains covalently bound to viral genomic RNA. VPg is uridylylated prior to priming replication into VPg-pUpU. The oriI viral genomic sequence may act as a template for this. The VPg-pUpU is then used as primer on the genomic RNA poly(A) by the RNA-dependent RNA polymerase to replicate the viral genome. During genome replication, the VPg-RNA linkage is removed by the host TDP2, thereby accelerating replication. During the late stage of the replication cycle, host TDP2 is excluded from sites of viral RNA synthesis and encapsidation, allowing for the generation of progeny virions. Involved in the viral replication complex and viral polypeptide maturation. It exhibits protease activity with a specificity and catalytic efficiency that is different from protease 3C. Protein 3CD lacks polymerase activity. Protein 3CD binds to the 5'UTR of the viral genome. Functionally, major viral protease that mediates proteolytic processing of the polyprotein. Cleaves host EIF5B, contributing to host translation shutoff. Cleaves also host PABPC1, contributing to host translation shutoff. Cleaves and inhibits host RIGI, thereby inhibiting the type-I IFN production and the establishment of the antiviral state. Cleaves and inhibits host MAVS, thereby inhibiting the type-I IFN production and the establishment of the antiviral state. Cleaves and inhibits host TICAM1/TRIF, thereby inhibiting the type-I IFN production. Cleaves host NLRP1, triggers host N-glycine-mediated degradation of the autoinhibitory NLRP1 N-terminal fragment. Cleaves host transcription factor TFEB, thereby disrupting host lysosomal functions and enhancing viral infection. Its function is as follows. Replicates the viral genomic RNA on the surface of intracellular membranes. May form linear arrays of subunits that propagate along a strong head-to-tail interaction called interface-I. Covalently attaches UMP to a tyrosine of VPg, which is used to prime RNA synthesis. The positive stranded RNA genome is first replicated at virus induced membranous vesicles, creating a dsRNA genomic replication form. This dsRNA is then used as template to synthesize positive stranded RNA genomes. ss(+)RNA genomes are either translated, replicated or encapsidated. The chain is Genome polyprotein from Coxsackievirus B3 (strain Nancy).